The chain runs to 205 residues: Recombination protein RecR (205 aa).

The C4-type zinc finger occupies 59–74 (CAMCNTFCEGGLCDIC). In terms of domain architecture, Toprim spans 82–177 (RRLMVVHMPA…KVSRLSQGIP (96 aa)).

It belongs to the RecR family.

In terms of biological role, may play a role in DNA repair. It seems to be involved in an RecBC-independent recombinational process of DNA repair. It may act with RecF and RecO. The sequence is that of Recombination protein RecR from Neisseria meningitidis serogroup C (strain 053442).